A 78-amino-acid chain; its full sequence is Acyl carrier protein (78 aa).

The 76-residue stretch at 2–77 folds into the Carrier domain; it reads STIEESVKSI…AAIDFIKESK (76 aa). S37 carries the post-translational modification O-(pantetheine 4'-phosphoryl)serine.

Belongs to the acyl carrier protein (ACP) family. Post-translationally, 4'-phosphopantetheine is transferred from CoA to a specific serine of apo-ACP by AcpS. This modification is essential for activity because fatty acids are bound in thioester linkage to the sulfhydryl of the prosthetic group.

The protein resides in the cytoplasm. Its pathway is lipid metabolism; fatty acid biosynthesis. Its function is as follows. Carrier of the growing fatty acid chain in fatty acid biosynthesis. This is Acyl carrier protein from Wigglesworthia glossinidia brevipalpis.